Reading from the N-terminus, the 249-residue chain is 5'-nucleotidase SurE (249 aa).

A divalent metal cation is bound by residues D9, D10, S40, and N92.

This sequence belongs to the SurE nucleotidase family. Requires a divalent metal cation as cofactor.

The protein resides in the cytoplasm. It carries out the reaction a ribonucleoside 5'-phosphate + H2O = a ribonucleoside + phosphate. Functionally, nucleotidase that shows phosphatase activity on nucleoside 5'-monophosphates. This Shewanella sp. (strain ANA-3) protein is 5'-nucleotidase SurE.